We begin with the raw amino-acid sequence, 364 residues long: Sec-independent protein translocase protein TatC (364 aa).

7 helical membrane passes run 42-62 (IALL…PRIF), 107-127 (MIAA…SFIT), 139-159 (LTFV…AYLT), 160-180 (LSTG…SVLD), 194-214 (IFGL…AGIV), 225-245 (PEIF…DPFT), and 246-266 (MLAL…IGWL). The segment at 277–364 (TSPYADLDDD…STDVTHGDIT (88 aa)) is disordered. A compositionally biased stretch (acidic residues) spans 282–295 (DLDDDETSPLDFDD). Residues 301 to 320 (AASAGPAATATSPGTANPPG) are compositionally biased toward low complexity. Over residues 324–344 (PPGTANPVGTANPVGTGSSTP) the composition is skewed to polar residues.

Belongs to the TatC family. The Tat system comprises two distinct complexes: a TatABC complex, containing multiple copies of TatA, TatB and TatC subunits, and a separate TatA complex, containing only TatA subunits. Substrates initially bind to the TatABC complex, which probably triggers association of the separate TatA complex to form the active translocon.

It localises to the cell membrane. Functionally, part of the twin-arginine translocation (Tat) system that transports large folded proteins containing a characteristic twin-arginine motif in their signal peptide across membranes. Together with TatB, TatC is part of a receptor directly interacting with Tat signal peptides. This Frankia casuarinae (strain DSM 45818 / CECT 9043 / HFP020203 / CcI3) protein is Sec-independent protein translocase protein TatC.